Consider the following 598-residue polypeptide: ANEQDHCAAPRGDNASLEATFVKRCCHCCLLGRAAQAQGQSCEYNLMVGYQCGQVFRACCVKSQETGDLDVRSLQETDKITEVEEEQEDPYLNDRCRGGGPCKQQCRDTGDEVVCSCFVGYQLLSDGVSCEDVNECITGSHSCRLGESCINTVGSFRCQRDSSCGTGYELTEDNSCKDIDQCESGIHNCLPDFICQNTLGSFRCRPKLQCKNGFIQDALANCIDINECLSIVSAPCPTGHTCINTEGSYTQKNVPNCGRGYHLNEEGTRCDVNECAPPAEPCGKGHRCVNSPGSFRCECKTGYYFDGISRMCVDVNECQRYPGRLCGHKCENTLGSYVCSCSVGFRLSVDGRSCEDINECSSSPCSQECANVYGSYQCYCRRGYQLSDVDGVTCEDIDECALPTGGHICSYRCINIPGSFQCSCPASGYRLAPNGRNCQDIDECVTGIHNCSINETCFNIQGGFRCLAFECPENYRRSAATRCERLPCHENRECSKLPLRITYYHLSFPTNIQAPAVVFRMGPSSAVPGDSMQLAITGGNEEGFFTTRKVSPHSGVVALTKPVPEPRDLLLTVKMDLYRHGTVSSFVAKLFIFVSAEL.

Cystine bridges form between alanine 1–cysteine 25, cysteine 7–cysteine 26, cysteine 28–cysteine 52, cysteine 29–cysteine 59, cysteine 42–cysteine 60, cysteine 96–cysteine 106, cysteine 102–cysteine 115, cysteine 117–cysteine 130, cysteine 136–cysteine 149, cysteine 143–cysteine 158, cysteine 164–cysteine 176, cysteine 182–cysteine 195, cysteine 189–cysteine 204, cysteine 210–cysteine 222, cysteine 228–cysteine 242, cysteine 257–cysteine 270, cysteine 275–cysteine 288, cysteine 282–cysteine 297, cysteine 299–cysteine 312, cysteine 318–cysteine 330, cysteine 326–cysteine 339, cysteine 341–cysteine 354, cysteine 360–cysteine 369, cysteine 365–cysteine 378, cysteine 380–cysteine 394, cysteine 400–cysteine 413, cysteine 409–cysteine 422, cysteine 424–cysteine 438, cysteine 444–cysteine 457, cysteine 451–cysteine 466, and cysteine 471–cysteine 483. Anaphylatoxin-like domains follow at residues 1 to 27 (ANEQ…RCCH) and 28 to 60 (CCLL…RACC). N-linked (GlcNAc...) asparagine glycosylation occurs at asparagine 14. An EGF-like 1 domain is found at 92–131 (LNDRCRGGGPCKQQCRDTGDEVVCSCFVGYQLLSDGVSCE). Positions 132–177 (DVNECITGSHSCRLGESCINTVGSFRCQRDSSCGTGYELTEDNSCK) constitute an EGF-like 2; calcium-binding domain. The 46-residue stretch at 178–223 (DIDQCESGIHNCLPDFICQNTLGSFRCRPKLQCKNGFIQDALANCI) folds into the EGF-like 3; calcium-binding domain. In terms of domain architecture, EGF-like 4; calcium-binding spans 224–270 (DINECLSIVSAPCPTGHTCINTEGSYTQKNVPNCGRGYHLNEEGTRC). One can recognise an EGF-like 5; calcium-binding domain in the interval 271–313 (DVNECAPPAEPCGKGHRCVNSPGSFRCECKTGYYFDGISRMCV). The tract at residues 271 to 355 (DVNECAPPAE…RLSVDGRSCE (85 aa)) is self-association and FN1-binding. Residues 314-355 (DVNECQRYPGRLCGHKCENTLGSYVCSCSVGFRLSVDGRSCE) form the EGF-like 6; calcium-binding domain. An EGF-like 7; calcium-binding domain is found at 356 to 395 (DINECSSSPCSQECANVYGSYQCYCRRGYQLSDVDGVTCE). Residues 396-439 (DIDECALPTGGHICSYRCINIPGSFQCSCPASGYRLAPNGRNCQ) enclose the EGF-like 8; calcium-binding domain. The EGF-like 9; calcium-binding domain occupies 440 to 484 (DIDECVTGIHNCSINETCFNIQGGFRCLAFECPENYRRSAATRCE). Residues asparagine 450 and asparagine 454 are each glycosylated (N-linked (GlcNAc...) asparagine).

It belongs to the fibulin family. Homomultimerizes and interacts with various extracellular matrix components. Interacts with FBLN7. Interacts with the mature/soluble form of DTR. Interacts with CCN3.

It is found in the secreted. The protein resides in the extracellular space. It localises to the extracellular matrix. Incorporated into fibronectin-containing matrix fibers. May play a role in cell adhesion and migration along protein fibers within the extracellular matrix (ECM). Could be important for certain developmental processes and contribute to the supramolecular organization of ECM architecture, in particular to those of basement membranes. May serve to anchor the mature/soluble form of DTR to its fibers as it migrates through the extracellular matrix. The direct physical association with DTR may be useful in such tissue developmental processes as wound healing. In Chlorocebus aethiops (Green monkey), this protein is Fibulin-1 (FBLN1).